Reading from the N-terminus, the 214-residue chain is Putative ankyrin repeat protein RF_1081 (214 aa).

The segment covering 1 to 14 has biased composition (polar residues); sequence MRKQQIPTLSTSAL. The tract at residues 1–32 is disordered; the sequence is MRKQQIPTLSTSALDKSPGPGSPDSDIEMKST. One copy of the ANK repeat lies at 67 to 135; the sequence is NPNALLHEAA…EEPILVTKKD (69 aa).

In Rickettsia felis (strain ATCC VR-1525 / URRWXCal2) (Rickettsia azadi), this protein is Putative ankyrin repeat protein RF_1081.